We begin with the raw amino-acid sequence, 29 residues long: Cytochrome b6-f complex subunit 8 (29 aa).

The chain crosses the membrane as a helical span at residues 3 to 23 (IISIGWVSLMVVFTFSISLVV).

It belongs to the PetN family. The 4 large subunits of the cytochrome b6-f complex are cytochrome b6, subunit IV (17 kDa polypeptide, PetD), cytochrome f and the Rieske protein, while the 4 small subunits are PetG, PetL, PetM and PetN. The complex functions as a dimer.

The protein localises to the plastid. It localises to the chloroplast thylakoid membrane. Its function is as follows. Component of the cytochrome b6-f complex, which mediates electron transfer between photosystem II (PSII) and photosystem I (PSI), cyclic electron flow around PSI, and state transitions. This is Cytochrome b6-f complex subunit 8 from Staurastrum punctulatum (Green alga).